The following is a 383-amino-acid chain: Na(+)/H(+) antiporter NhaA (383 aa).

The next 11 membrane-spanning stretches (helical) occupy residues 10-30 (LIGG…NNSP), 56-76 (LMHW…GLEI), 91-111 (IITP…IYLS), 121-141 (GWAI…ALLG), 150-170 (LLVI…IAIF), 174-194 (SLSL…IICN), 206-226 (VVLG…ATLA), 254-274 (PWII…ISFS), 289-308 (IIWG…LAVF), 327-347 (GISL…VLAF), and 355-375 (AIKI…YIVL).

The protein belongs to the NhaA Na(+)/H(+) (TC 2.A.33) antiporter family.

It is found in the cell inner membrane. The enzyme catalyses Na(+)(in) + 2 H(+)(out) = Na(+)(out) + 2 H(+)(in). Functionally, na(+)/H(+) antiporter that extrudes sodium in exchange for external protons. The polypeptide is Na(+)/H(+) antiporter NhaA (Francisella tularensis subsp. tularensis (strain SCHU S4 / Schu 4)).